The primary structure comprises 199 residues: Interleukin-11 (199 aa).

The signal sequence occupies residues Met1 to Ala21. The segment at His182–Arg190 is important for interaction with IL11RA and for the stimulation of cell proliferation.

The protein belongs to the IL-6 superfamily. As to quaternary structure, interacts with IL11RA to associate with IL6ST, giving rise to a multimeric signaling complex.

It is found in the secreted. Cytokine that stimulates the proliferation of hematopoietic stem cells and megakaryocyte progenitor cells and induces megakaryocyte maturation resulting in increased platelet production. Also promotes the proliferation of hepatocytes in response to liver damage. Binding to its receptor formed by IL6ST and IL11RA activates a signaling cascade that promotes cell proliferation. Signaling leads to the activation of intracellular protein kinases and the phosphorylation of STAT3. The interaction with the membrane-bound IL11RA and IL6ST stimulates 'classic signaling', whereas the binding of IL11 and soluble IL11RA to IL6ST stimulates 'trans-signaling'. This Macaca fascicularis (Crab-eating macaque) protein is Interleukin-11 (IL11).